Reading from the N-terminus, the 364-residue chain is tRNA 2-selenouridine synthase (364 aa).

The region spanning 14–137 is the Rhodanese domain; the sequence is LLADTPLIDV…LRQTAIQATW (124 aa). The active-site S-selanylcysteine intermediate is C97.

It belongs to the SelU family. Monomer.

The catalysed reaction is 5-methylaminomethyl-2-thiouridine(34) in tRNA + selenophosphate + (2E)-geranyl diphosphate + H2O + H(+) = 5-methylaminomethyl-2-selenouridine(34) in tRNA + (2E)-thiogeraniol + phosphate + diphosphate. The enzyme catalyses 5-methylaminomethyl-2-thiouridine(34) in tRNA + (2E)-geranyl diphosphate = 5-methylaminomethyl-S-(2E)-geranyl-thiouridine(34) in tRNA + diphosphate. It catalyses the reaction 5-methylaminomethyl-S-(2E)-geranyl-thiouridine(34) in tRNA + selenophosphate + H(+) = 5-methylaminomethyl-2-(Se-phospho)selenouridine(34) in tRNA + (2E)-thiogeraniol. It carries out the reaction 5-methylaminomethyl-2-(Se-phospho)selenouridine(34) in tRNA + H2O = 5-methylaminomethyl-2-selenouridine(34) in tRNA + phosphate. In terms of biological role, involved in the post-transcriptional modification of the uridine at the wobble position (U34) of tRNA(Lys), tRNA(Glu) and tRNA(Gln). Catalyzes the conversion of 2-thiouridine (S2U-RNA) to 2-selenouridine (Se2U-RNA). Acts in a two-step process involving geranylation of 2-thiouridine (S2U) to S-geranyl-2-thiouridine (geS2U) and subsequent selenation of the latter derivative to 2-selenouridine (Se2U) in the tRNA chain. In Salmonella heidelberg (strain SL476), this protein is tRNA 2-selenouridine synthase.